The following is a 309-amino-acid chain: MRKIIVGSRKSKLALTQTNWFIDQLKALGLPYEFEVKEIVTKGDVILDVTLSKVGGKGLFVKEIEHALLTKEIDMAVHSMKDMPAVLPEGLMIGCTPKRVDPRDAFISKSGASFKELAEGAILGTSSLRRSAQLLAARPDLQVKWIRGNIDTRLRKLKEEDYDAIILATAGLQRMGWDDEVITEHLDETLCVPAVGQGALAIECREDDTDLLQLLAHINDAVTERTVAAERVFLHKLEGGCQVPIAGYATLTENDAIELTALVGSMDGSVLLKETVVGTDPEKVGLEAADRLIKQGAKELILAANKGQQ.

An S-(dipyrrolylmethanemethyl)cysteine modification is found at cysteine 241.

The protein belongs to the HMBS family. As to quaternary structure, monomer. It depends on dipyrromethane as a cofactor.

The enzyme catalyses 4 porphobilinogen + H2O = hydroxymethylbilane + 4 NH4(+). It functions in the pathway porphyrin-containing compound metabolism; protoporphyrin-IX biosynthesis; coproporphyrinogen-III from 5-aminolevulinate: step 2/4. Tetrapolymerization of the monopyrrole PBG into the hydroxymethylbilane pre-uroporphyrinogen in several discrete steps. This chain is Porphobilinogen deaminase, found in Bacillus cereus (strain ZK / E33L).